The chain runs to 268 residues: MKFAVIGNPISHSLSPVMHRANFNSLGLDDTYEALNIPIEDFHLIKEIISKKELEGFNITIPHKERIIPYLDYVDEQAINAGAVNTVLIKDGKWIGYNTDGIGYVKGLHSVYPDLENAYILILGAGGASKGIAYELAKFVKPKLTVANRTMARFESWNLNINQISLADAEKYLAEFDIVINTTPAGMAGNNESIINLKHLSPNTLMSDIVYIPYKTPILEEAERKGNHIYNGLDMFVYQGAESFKIWTNKDADINSMKTAVLQQLKGE.

Residues 13-15 (SLS) and threonine 60 contribute to the shikimate site. Lysine 64 (proton acceptor) is an active-site residue. NADP(+) is bound at residue glutamate 76. Residues asparagine 85 and aspartate 100 each coordinate shikimate. NADP(+) is bound by residues 124-128 (GAGGA), 148-153 (NRTMAR), and isoleucine 209. Tyrosine 211 is a shikimate binding site. Glycine 232 contacts NADP(+).

It belongs to the shikimate dehydrogenase family. As to quaternary structure, homodimer.

The enzyme catalyses shikimate + NADP(+) = 3-dehydroshikimate + NADPH + H(+). Its pathway is metabolic intermediate biosynthesis; chorismate biosynthesis; chorismate from D-erythrose 4-phosphate and phosphoenolpyruvate: step 4/7. Its function is as follows. Involved in the biosynthesis of the chorismate, which leads to the biosynthesis of aromatic amino acids. Catalyzes the reversible NADPH linked reduction of 3-dehydroshikimate (DHSA) to yield shikimate (SA). The polypeptide is Shikimate dehydrogenase (NADP(+)) (Staphylococcus aureus (strain USA300)).